A 332-amino-acid chain; its full sequence is Azadirone synthase LFS (332 aa).

Positions 181-286 (ANANYTNMFH…RYSTGTFICP (106 aa)) constitute a Fe2OG dioxygenase domain. Fe cation-binding residues include His208, Asp210, and His269. Arg277 lines the 2-oxoglutarate pocket.

It belongs to the iron/ascorbate-dependent oxidoreductase family. Requires Fe(2+) as cofactor. In terms of tissue distribution, mainly expressed in petioles and, to a lower extent, in roots.

The enzyme catalyses (1S,3bR,4R,5aR,9aR,9bR,11aS)-1-(1-hydroxy-4-oxobutan-2-yl)-3b,6,6,9a,11a-pentamethyl-7-oxo-1H,2H,3bH,4H,5H,5aH,6H,7H,9aH,9bH,10H,11H,11aH-cyclopenta[a]phenanthren-4-yl acetate + 2-oxoglutarate + O2 = azadirone + succinate + CO2 + 2 H2O. It participates in secondary metabolite biosynthesis; terpenoid biosynthesis. In terms of biological role, 2-oxoglutarate-Fe(II) type oxidoreductase involved in the biosynthesis of limonoids triterpene natural products such as azadirachtin, an antifeedant widely used as bioinsecticide, and possessing many medicinal applications including anti-tumoral, anti-malarial, anti-rheumatic, antibacterial, anti-inflammatory, anti-pyretic and diuretic effects. Catalyzes the formation of azadirone. This Melia azedarach (Chinaberry tree) protein is Azadirone synthase LFS.